A 170-amino-acid chain; its full sequence is Peptide deformylase (170 aa).

Positions 91 and 133 each coordinate Fe cation. Residue glutamate 134 is part of the active site. Histidine 137 serves as a coordination point for Fe cation.

This sequence belongs to the polypeptide deformylase family. The cofactor is Fe(2+).

The enzyme catalyses N-terminal N-formyl-L-methionyl-[peptide] + H2O = N-terminal L-methionyl-[peptide] + formate. Its function is as follows. Removes the formyl group from the N-terminal Met of newly synthesized proteins. Requires at least a dipeptide for an efficient rate of reaction. N-terminal L-methionine is a prerequisite for activity but the enzyme has broad specificity at other positions. In Aeromonas salmonicida (strain A449), this protein is Peptide deformylase.